Consider the following 379-residue polypeptide: Bifunctional enzyme IspD/IspF (379 aa).

Residues 1–223 (MTVAVIIVAA…RERKGLTMDV (223 aa)) form a 2-C-methyl-D-erythritol 4-phosphate cytidylyltransferase region. Positions 224 to 379 (RLGNGYDVHA…SIATVTLIGA (156 aa)) are 2-C-methyl-D-erythritol 2,4-cyclodiphosphate synthase. A divalent metal cation-binding residues include aspartate 230 and histidine 232. 4-CDP-2-C-methyl-D-erythritol 2-phosphate-binding positions include 230 to 232 (DVH) and 256 to 257 (HS). Residue histidine 264 participates in a divalent metal cation binding. 4-CDP-2-C-methyl-D-erythritol 2-phosphate-binding positions include 278-280 (DIG), 354-357 (TTSE), phenylalanine 361, and arginine 364.

In the N-terminal section; belongs to the IspD/TarI cytidylyltransferase family. IspD subfamily. It in the C-terminal section; belongs to the IspF family. A divalent metal cation is required as a cofactor.

It catalyses the reaction 2-C-methyl-D-erythritol 4-phosphate + CTP + H(+) = 4-CDP-2-C-methyl-D-erythritol + diphosphate. It carries out the reaction 4-CDP-2-C-methyl-D-erythritol 2-phosphate = 2-C-methyl-D-erythritol 2,4-cyclic diphosphate + CMP. The protein operates within isoprenoid biosynthesis; isopentenyl diphosphate biosynthesis via DXP pathway; isopentenyl diphosphate from 1-deoxy-D-xylulose 5-phosphate: step 2/6. It participates in isoprenoid biosynthesis; isopentenyl diphosphate biosynthesis via DXP pathway; isopentenyl diphosphate from 1-deoxy-D-xylulose 5-phosphate: step 4/6. Its function is as follows. Bifunctional enzyme that catalyzes the formation of 4-diphosphocytidyl-2-C-methyl-D-erythritol from CTP and 2-C-methyl-D-erythritol 4-phosphate (MEP) (IspD), and catalyzes the conversion of 4-diphosphocytidyl-2-C-methyl-D-erythritol 2-phosphate (CDP-ME2P) to 2-C-methyl-D-erythritol 2,4-cyclodiphosphate (ME-CPP) with a corresponding release of cytidine 5-monophosphate (CMP) (IspF). The protein is Bifunctional enzyme IspD/IspF of Rhodobacter capsulatus (strain ATCC BAA-309 / NBRC 16581 / SB1003).